A 163-amino-acid polypeptide reads, in one-letter code: Cyclic pyranopterin monophosphate synthase (163 aa).

Substrate-binding positions include 79–81 and 117–118; these read LCH and ME. The active site involves Asp-132.

This sequence belongs to the MoaC family. In terms of assembly, homohexamer; trimer of dimers.

The catalysed reaction is (8S)-3',8-cyclo-7,8-dihydroguanosine 5'-triphosphate = cyclic pyranopterin phosphate + diphosphate. The protein operates within cofactor biosynthesis; molybdopterin biosynthesis. In terms of biological role, catalyzes the conversion of (8S)-3',8-cyclo-7,8-dihydroguanosine 5'-triphosphate to cyclic pyranopterin monophosphate (cPMP). The polypeptide is Cyclic pyranopterin monophosphate synthase (Chloroflexus aurantiacus (strain ATCC 29366 / DSM 635 / J-10-fl)).